Consider the following 257-residue polypeptide: Movement protein (257 aa).

The segment at 212 to 257 (NQSKKGSNKYVGKRNDNKGLNKEGKLFDKVRIGQNSESSDAESSSF) is disordered. The span at 224–242 (KRNDNKGLNKEGKLFDKVR) shows a compositional bias: basic and acidic residues. The span at 247 to 257 (SESSDAESSSF) shows a compositional bias: low complexity.

It belongs to the tobamovirus movement protein family.

Its subcellular location is the host cytoplasm. The protein resides in the host cytoskeleton. It is found in the host cell junction. The protein localises to the host plasmodesma. Functionally, transports viral genome to neighboring plant cells directly through plasmosdesmata, without any budding. The movement protein allows efficient cell to cell propagation, by bypassing the host cell wall barrier. Forms a ribonucleoprotein complex with viral RNA. Binds microtubules and modulates microtubule stability. Can bind double-stranded DNA. This chain is Movement protein (MP), found in Pepper mild mottle virus (strain Spain) (PMMV-S).